We begin with the raw amino-acid sequence, 550 residues long: Chaperonin GroEL (550 aa).

Residues 30-33 (TLGP), Lys-51, 87-91 (DGTTT), Gly-415, 479-481 (NAA), and Asp-495 each bind ATP. A disordered region spans residues 526–550 (KDEKSDLGNSSAPSAGGMGGMGGMM). A compositionally biased stretch (gly residues) spans 541-550 (GGMGGMGGMM).

The protein belongs to the chaperonin (HSP60) family. In terms of assembly, forms a cylinder of 14 subunits composed of two heptameric rings stacked back-to-back. Interacts with the co-chaperonin GroES.

The protein localises to the cytoplasm. It catalyses the reaction ATP + H2O + a folded polypeptide = ADP + phosphate + an unfolded polypeptide.. Functionally, together with its co-chaperonin GroES, plays an essential role in assisting protein folding. The GroEL-GroES system forms a nano-cage that allows encapsulation of the non-native substrate proteins and provides a physical environment optimized to promote and accelerate protein folding. The sequence is that of Chaperonin GroEL from Buchnera aphidicola subsp. Baizongia pistaciae (strain Bp).